The chain runs to 591 residues: Aspartate--tRNA ligase (591 aa).

Glutamate 171 is an L-aspartate binding site. The interval 195–198 is aspartate; that stretch reads QLFK. Residue arginine 217 coordinates L-aspartate. Residues 217 to 219 and glutamine 226 contribute to the ATP site; that span reads RDE. Histidine 448 serves as a coordination point for L-aspartate. Glutamate 482 provides a ligand contact to ATP. An L-aspartate-binding site is contributed by arginine 489. Position 534-537 (534-537) interacts with ATP; it reads GLDR.

Belongs to the class-II aminoacyl-tRNA synthetase family. Type 1 subfamily. Homodimer.

The protein localises to the cytoplasm. The catalysed reaction is tRNA(Asp) + L-aspartate + ATP = L-aspartyl-tRNA(Asp) + AMP + diphosphate. Catalyzes the attachment of L-aspartate to tRNA(Asp) in a two-step reaction: L-aspartate is first activated by ATP to form Asp-AMP and then transferred to the acceptor end of tRNA(Asp). In Vibrio cholerae serotype O1 (strain ATCC 39541 / Classical Ogawa 395 / O395), this protein is Aspartate--tRNA ligase.